The primary structure comprises 260 residues: HTH-type transcriptional repressor NanR (260 aa).

In terms of domain architecture, HTH gntR-type spans 27–95 (KKLSEMVEEE…NGERARISRP (69 aa)). A DNA-binding region (H-T-H motif) is located at residues 55–74 (ERELMAFFNVGRPSVREALA).

It belongs to the NanR family.

In terms of biological role, transcriptional repressor that controls expression of the genes required for the catabolism of sialic acids. This Edwardsiella tarda (strain FL6-60) protein is HTH-type transcriptional repressor NanR.